Here is a 235-residue protein sequence, read N- to C-terminus: Acyl-protein thioesterase 1 (235 aa).

Catalysis depends on charge relay system residues S119, D172, and H206.

Belongs to the AB hydrolase superfamily. AB hydrolase 2 family.

It localises to the cytoplasm. The protein resides in the nucleus. It catalyses the reaction S-hexadecanoyl-L-cysteinyl-[protein] + H2O = L-cysteinyl-[protein] + hexadecanoate + H(+). Functionally, hydrolyzes fatty acids from S-acylated cysteine residues in proteins with a strong preference for palmitoylated G-alpha proteins over other acyl substrates. Mediates the deacylation of G-alpha proteins such as GPA1 in vivo, but has weak or no activity toward palmitoylated Ras proteins. Has weak lysophospholipase activity in vitro; however such activity may not exist in vivo. This Eremothecium gossypii (strain ATCC 10895 / CBS 109.51 / FGSC 9923 / NRRL Y-1056) (Yeast) protein is Acyl-protein thioesterase 1.